Reading from the N-terminus, the 376-residue chain is Alanine racemase (376 aa).

Residue lysine 40 is the Proton acceptor; specific for D-alanine of the active site. Lysine 40 bears the N6-(pyridoxal phosphate)lysine mark. Arginine 138 contacts substrate. The Proton acceptor; specific for L-alanine role is filled by tyrosine 270. Position 317 (methionine 317) interacts with substrate.

The protein belongs to the alanine racemase family. Pyridoxal 5'-phosphate is required as a cofactor.

It carries out the reaction L-alanine = D-alanine. It functions in the pathway amino-acid biosynthesis; D-alanine biosynthesis; D-alanine from L-alanine: step 1/1. Functionally, catalyzes the interconversion of L-alanine and D-alanine. May also act on other amino acids. This chain is Alanine racemase (alr), found in Lactobacillus gasseri (strain ATCC 33323 / DSM 20243 / BCRC 14619 / CIP 102991 / JCM 1131 / KCTC 3163 / NCIMB 11718 / NCTC 13722 / AM63).